Here is a 388-residue protein sequence, read N- to C-terminus: Mannitol-1-phosphate 5-dehydrogenase (388 aa).

Residue 3–14 (ALHFGAGNIGRG) participates in NAD(+) binding.

Belongs to the mannitol dehydrogenase family.

It catalyses the reaction D-mannitol 1-phosphate + NAD(+) = beta-D-fructose 6-phosphate + NADH + H(+). The polypeptide is Mannitol-1-phosphate 5-dehydrogenase (Buchnera aphidicola subsp. Schizaphis graminum (strain Sg)).